We begin with the raw amino-acid sequence, 190 residues long: Lipid A acyltransferase PagP (190 aa).

The signal sequence occupies residues 1–24; the sequence is MNRYLLTTLSAPLLALFFSFSLQA. Active-site residues include H62, D105, and S106.

The protein belongs to the lipid A palmitoyltransferase family. Homodimer.

The protein resides in the cell outer membrane. It carries out the reaction a lipid A + a 1,2-diacyl-sn-glycero-3-phosphocholine = a hepta-acyl lipid A + a 2-acyl-sn-glycero-3-phosphocholine. The enzyme catalyses a lipid IVA + a 1,2-diacyl-sn-glycero-3-phosphocholine = a lipid IVB + a 2-acyl-sn-glycero-3-phosphocholine. It catalyses the reaction a lipid IIA + a 1,2-diacyl-sn-glycero-3-phosphocholine = a lipid IIB + a 2-acyl-sn-glycero-3-phosphocholine. Its function is as follows. Transfers a fatty acid residue from the sn-1 position of a phospholipid to the N-linked hydroxyfatty acid chain on the proximal unit of lipid A or its precursors. This is Lipid A acyltransferase PagP from Pantoea ananatis (strain LMG 20103).